The sequence spans 316 residues: Coiled-coil domain-containing protein 42 (316 aa).

2 coiled-coil regions span residues 39-146 and 178-232; these read SPSI…SAKL and LVSM…DRAR.

The protein belongs to the CFAP73 family. In terms of assembly, interacts with ODF1 and ODF2. Interacts with CCDC38. Interacts with CCDC146. Interacts with CFAP53.

The protein localises to the cytoplasm. The protein resides in the perinuclear region. It localises to the cytoskeleton. Its subcellular location is the cell projection. It is found in the cilium. The protein localises to the flagellum. The protein resides in the microtubule organizing center. It localises to the centrosome. Functionally, essential for male fertility. Required for sperm development. The protein is Coiled-coil domain-containing protein 42 of Homo sapiens (Human).